Reading from the N-terminus, the 45-residue chain is DNA-directed RNA polymerase subunit Rpo12 (45 aa).

Zn(2+) contacts are provided by C8, C23, and C26.

It belongs to the archaeal Rpo12/eukaryotic RPC10 RNA polymerase subunit family. As to quaternary structure, part of the RNA polymerase complex. Zn(2+) is required as a cofactor.

It localises to the cytoplasm. It catalyses the reaction RNA(n) + a ribonucleoside 5'-triphosphate = RNA(n+1) + diphosphate. Its function is as follows. DNA-dependent RNA polymerase (RNAP) catalyzes the transcription of DNA into RNA using the four ribonucleoside triphosphates as substrates. This Methanosarcina acetivorans (strain ATCC 35395 / DSM 2834 / JCM 12185 / C2A) protein is DNA-directed RNA polymerase subunit Rpo12.